A 1507-amino-acid chain; its full sequence is Nonribosomal peptide synthetase ataP (1507 aa).

The Carrier 1 domain occupies Met-1–Tyr-72. Ser-33 is subject to O-(pantetheine 4'-phosphoryl)serine. The segment at Thr-98 to Thr-119 is disordered. Positions Gly-105–Thr-115 are enriched in low complexity. The condensation 1 stretch occupies residues Thr-163–Leu-429. Residues Ala-514–Arg-893 form an adenylation region. The region spanning Asn-988–Gln-1065 is the Carrier 2 domain. At Ser-1025 the chain carries O-(pantetheine 4'-phosphoryl)serine. The condensation 2 stretch occupies residues Thr-1099–Asn-1471.

This sequence belongs to the NRP synthetase family.

It functions in the pathway mycotoxin biosynthesis. In terms of biological role, nonribosomal peptide synthetase; part of the gene cluster that mediates the biosynthesis of acetylaranotin, a member of the epipolythiodioxopiperazine (ETP) class of toxins characterized by a disulfide-bridged cyclic dipeptide. The first step of acetylaranotin biosynthesis is performed by the NRPS ataP which produces diketopiperazine cyclo-L-Phe-L-Phe via the condensation of 2 phenylalanines (L-Phe). The ataC domain of ataTC then catalyzes the formation of bishydroxylation of cyclo-L-Phe-L-Phe. The glutathione S-transferase domain ataG in ataIMG further catalyzes the conjugation of two glutathiones to the bishydroxylated intermediate. Next, the dipeptidase ataJ removes the Glu residues. The following step is performed by the carbon sulfur lyase domain ataI of ataIMG which may convert the bis-cysteinyl adduct to yield an epidithiol intermediate. The ataT domain from ataTC then catalyzes the oxidation of the free dithiols, followed by a cyclization step catalyzed by the cytochrome P450 ataF. AtaF probably acts as an epoxidase to promote a dual epoxidation formation at C8 and C9 along with C8' and C9', followed by the spontaneous nucleophilic attack of the amide nitrogens N10 and N10' to yield an intermediate with the pyrrolidine partial structure. The final steps of acetylaranotin biosynthesis involve the acetylation and ring rearrangement of an epitetrathiodiketopiperazine intermediate to produce acetylaranotin. AtaH probably catalyzes the acetylation of epitetrathiodiketopiperazine to produce a diacetate and ataY is responsible for the formation of the dihydrooxepin moiety that converts the diacetate intermediate to acetylaranotin via acetylapoaranotin. Both enzymes could function independently in the absence of the other. The acetylaranotin bis-thiomethyltransferase ataS located outside of acetylaranotin gene cluster is the main thiomethyltransferase responsible for converting acetylaranotin and its related intermediates to their methylated forms. This Aspergillus terreus (strain NIH 2624 / FGSC A1156) protein is Nonribosomal peptide synthetase ataP.